Here is a 140-residue protein sequence, read N- to C-terminus: uncharacterized protein (140 aa).

A coiled-coil region spans residues 27 to 65; it reads LLGEVSELELQKICFNRSLRNEINQLEEQNDISFVRVER.

This is an uncharacterized protein from Pasteurella multocida (strain Pm70).